The sequence spans 335 residues: Thioredoxin reductase (335 aa).

FAD is bound by residues S22–A25, E44–A51, N60, and V93. A disulfide bond links C145 and C148. Residues S166, H185, R191, I248, and Y268 each contribute to the NADP(+) site. FAD contacts are provided by residues D288 and R295–V298. R295 provides a ligand contact to NADP(+).

It belongs to the class-II pyridine nucleotide-disulfide oxidoreductase family. Homodimer. Requires FAD as cofactor.

The protein localises to the cytoplasm. It catalyses the reaction [thioredoxin]-dithiol + NADP(+) = [thioredoxin]-disulfide + NADPH + H(+). The polypeptide is Thioredoxin reductase (Mycobacterium tuberculosis (strain CDC 1551 / Oshkosh)).